Reading from the N-terminus, the 879-residue chain is MTELLADEVFKDRVRIFQEYLEHDTDDANVTLYQEAILRMLNMGQRRLIVNIDELRDYNRELADGVLLKPLEYVEPFDEALRNVVSTLIDPVVHKDLKDKLFYVGFRGSFGDHHVNPRTLRAMHLNKMISLEGIVTRCSFVRPKVIKSVHYCEATKRHHFKQYADATMNGGLSFQSTVYPTQDENGNPLSIEFGFSTFRDHQSISLQEMPERAPPGQLPRSIDILLDDDLVDTVKPGDRVNIVGQYRSMGSKTSGNTSATFRTVLLANNVVLLGNKPGLGNVGGGALDITDADIRNINKLARKKNVFELLSTSLAPSIYGYEYVKQAILLLLLGGTEKNLTNGTHIRGDINILMVGDPSTAKSQLLRFVLNTAPLAIATTGRGSSGVGLTAAVTTDKETGERRLEAGAMVLADRGVVCIDEFDKMSDIDRVAIHEVMEQQTVTIAKAGIHTSLNARCSVIAAANPIYGQYDIRKDPHQNIALPDSMLSRFDLLFIVTDDIDDKKDRALSEHVLRMHRYLPPGVEPGTPVRDSLNSVLNVGATNAAGVSTENVEQEVETPVWETFSSLLHANARTKKKELLNINFVRKYIQYAKSRIHPILNQATAEYITNIYCGLRNDDLQGNQRRTSPLTARTLETLIRLSTAHAKARLSSVVEVKDAKAAEKILRYALFREVVKPKRKKHKKQRLEAGEEFDSEDDNSDDMDIEESEEEMDTNMVIDSGSRRVTRSQNATSQSQESGSEIGSSIAGTAGSYNVGTSNTQLSWPSTHSTLPATSRELASSDRNINTGTSVASEVSASVSEQSTVSLPREKMSVFMARLASLTKSELFSEECASLEDVLESINNIEDDVGFSREEAIVALKEMDAQNKIMFSDNVVYRI.

Residues 306-513 (VFELLSTSLA…KDRALSEHVL (208 aa)) enclose the MCM domain. 356–363 (GDPSTAKS) provides a ligand contact to ATP. The short motif at 488-491 (SRFD) is the Arginine finger element. Residues 679 to 778 (RKKHKKQRLE…STLPATSREL (100 aa)) form a disordered region. Residues 690 to 713 (GEEFDSEDDNSDDMDIEESEEEMD) are compositionally biased toward acidic residues. A compositionally biased stretch (low complexity) spans 732–752 (TSQSQESGSEIGSSIAGTAGS). Residues 754–778 (NVGTSNTQLSWPSTHSTLPATSREL) are compositionally biased toward polar residues.

This sequence belongs to the MCM family. In terms of assembly, component of the mcm2-7 complex. The complex forms a toroidal hexameric ring with the proposed subunit order mcm2-mcm6-mcm4-mcm7-mcm3-mcm5. The heterodimers of mcm4/mcm6 and mcm3/mcm5 interact with mcm2 and mcm7.

The protein localises to the nucleus. It carries out the reaction ATP + H2O = ADP + phosphate + H(+). Its function is as follows. Acts as a component of the mcm2-7 complex (mcm complex) which is the putative replicative helicase essential for 'once per cell cycle' DNA replication initiation and elongation in eukaryotic cells. The active ATPase sites in the mcm2-7 ring are formed through the interaction surfaces of two neighboring subunits such that a critical structure of a conserved arginine finger motif is provided in trans relative to the ATP-binding site of the Walker A box of the adjacent subunit. The six ATPase active sites, however, are likely to contribute differentially to the complex helicase activity. This chain is DNA replication licensing factor mcm3 (mcm3), found in Schizosaccharomyces pombe (strain 972 / ATCC 24843) (Fission yeast).